Consider the following 38-residue polypeptide: Potassium channel toxin alpha-KTx 3.8 (38 aa).

3 cysteine pairs are disulfide-bonded: Cys8–Cys28, Cys14–Cys33, and Cys18–Cys35. The tract at residues 26–33 (GKCMNGKC) is interaction with Ca(2+)-activated K(+) channels.

In terms of tissue distribution, expressed by the venom gland.

The protein resides in the secreted. Its function is as follows. Potassium channel inhibitor. The sequence is that of Potassium channel toxin alpha-KTx 3.8 from Hottentotta tamulus sindicus (Scorpion).